The chain runs to 379 residues: Methionine aminopeptidase 1 (379 aa).

The segment at 7-60 (KHICCGIDCNNEADRLQCPKCLNDGVKSYFCGQECFRNSWNIHKHLHRPPNVEK) adopts a C6H2-type zinc-finger fold. Residues C10, C15, C24, C27, C37, C41, H49, and H53 each contribute to the Zn(2+) site. H192 serves as a coordination point for a protein. 3 residues coordinate Zn(2+): D209, D220, and H289. H296 is an a protein binding site. Residues E322 and E353 each coordinate Zn(2+). Residue S373 is modified to Phosphoserine.

It belongs to the peptidase M24A family. Methionine aminopeptidase type 1 subfamily. Associates with the 60S ribosomal subunit of the 80S translational complex. Zn(2+) serves as cofactor. It depends on Co(2+) as a cofactor. The cofactor is Mn(2+). Fe(2+) is required as a cofactor.

The protein localises to the cytoplasm. It is found in the nucleus. It localises to the nucleolus. The catalysed reaction is Release of N-terminal amino acids, preferentially methionine, from peptides and arylamides.. Functionally, cotranslationally removes the N-terminal methionine from nascent proteins. The N-terminal methionine is often cleaved when the second residue in the primary sequence is small and uncharged (Met-Ala-, Cys, Gly, Pro, Ser, Thr, or Val). In Schizosaccharomyces pombe (strain 972 / ATCC 24843) (Fission yeast), this protein is Methionine aminopeptidase 1 (fma1).